The sequence spans 511 residues: Lysine--tRNA ligase 2 (511 aa).

Positions 1–22 (MTMEINNTDPFEKMPLPDDSGL) are disordered. Mg(2+) is bound by residues E421 and E428.

Belongs to the class-II aminoacyl-tRNA synthetase family. In terms of assembly, homodimer. It depends on Mg(2+) as a cofactor.

It is found in the cytoplasm. It carries out the reaction tRNA(Lys) + L-lysine + ATP = L-lysyl-tRNA(Lys) + AMP + diphosphate. The protein is Lysine--tRNA ligase 2 of Methanosarcina mazei (strain ATCC BAA-159 / DSM 3647 / Goe1 / Go1 / JCM 11833 / OCM 88) (Methanosarcina frisia).